The following is a 159-amino-acid chain: Probable NADH dehydrogenase [ubiquinone] 1 alpha subcomplex subunit 12 (159 aa).

It belongs to the complex I NDUFA12 subunit family. In terms of assembly, complex I is composed of at least 49 different subunits.

Its subcellular location is the mitochondrion inner membrane. Its function is as follows. Accessory subunit of the mitochondrial membrane respiratory chain NADH dehydrogenase (Complex I), that is believed not to be involved in catalysis. Complex I functions in the transfer of electrons from NADH to the respiratory chain. The immediate electron acceptor for the enzyme is believed to be ubiquinone. The sequence is that of Probable NADH dehydrogenase [ubiquinone] 1 alpha subcomplex subunit 12 from Arabidopsis thaliana (Mouse-ear cress).